We begin with the raw amino-acid sequence, 399 residues long: Ras-related GTP-binding protein C (399 aa).

The segment at 1–20 (MSLQYGAEETPLAGSYGAAD) is disordered. Residue Ser2 is modified to N-acetylserine. A phosphoserine mark is found at Ser2 and Ser15. GDP contacts are provided by Arg71, Ser72, Gly73, Lys74, Ser75, Ser76, Thr90, Glu94, Thr96, His178, Lys179, Asp181, Ser219, and Ile220. Residue Lys74 coordinates GTP. Thr90 is a GTP binding site. Thr96 contacts GTP. A Phosphothreonine modification is found at Thr96. Asp181 serves as a coordination point for GTP.

This sequence belongs to the GTR/RAG GTP-binding protein family. In terms of assembly, forms a heterodimer with RRAGA, in a sequence-independent manner, and RRAGB. Heterodimerization stabilizes proteins of the heterodimer. The GDP-bound form of RRAGC (in complex with the GTP-bound form of RRAGA or RRAGB), interacts with RPTOR, thereby promoting recruitment of mTORC1 to the lysosomes. Component of the lysosomal folliculin complex (LFC), composed of FLCN, FNIP1 (or FNIP2), RagA/RRAGA or RagB/RRAGB GDP-bound, RagC/RRAGC or RagD/RRAGD GTP-bound, and Ragulator. Interacts with NOL8. Interacts with SH3BP4; the interaction with this negative regulator is most probably direct, preferentially occurs with the inactive GDP-bound form of RRAGB, is negatively regulated by amino acids and prevents interaction with RPTOR. The Rag heterodimer interacts with SLC38A9; the probable amino acid sensor. Interacts with SESN1, SESN2 and SESN3. Interacts with PIP4P1. The Rag heterodimer interacts with the Ragulator complex. The GDP-bound form interacts with TFEB. The GDP-bound form interacts with TFE3.

Its subcellular location is the cytoplasm. It is found in the nucleus. The protein localises to the lysosome membrane. The enzyme catalyses GTP + H2O = GDP + phosphate + H(+). With respect to regulation, the activation of RagC/RRAGC is mediated by a GTPase activating protein (GAP). In high-amino acid conditions, activated by GTPase activating protein FLCN that stimulates RRAGC GTPase activity to turn it into its active GDP-bound form. In response to amino acid depletion, the GATOR1 complex inactivates RagC/RRAGC by securing the GTP-bound inactive form. Functionally, guanine nucleotide-binding protein that plays a crucial role in the cellular response to amino acid availability through regulation of the mTORC1 signaling cascade. Forms heterodimeric Rag complexes with RagA/RRAGA or RagB/RRAGB and cycles between an inactive GTP-bound and an active GDP-bound form: RagC/RRAGC is in its active form when GDP-bound RagC/RRAGC forms a complex with GTP-bound RagA/RRAGA (or RagB/RRAGB) and in an inactive form when GTP-bound RagC/RRAGC heterodimerizes with GDP-bound RagA/RRAGA (or RagB/RRAGB). In its GDP-bound active form, promotes the recruitment of mTORC1 to the lysosomes and its subsequent activation by the GTPase RHEB. This is a crucial step in the activation of the MTOR signaling cascade by amino acids. Also plays a central role in the non-canonical mTORC1 complex, which acts independently of RHEB and specifically mediates phosphorylation of MiT/TFE factors TFEB and TFE3: GDP-bound RagC/RRAGC mediates recruitment of MiT/TFE factors TFEB and TFE3. The protein is Ras-related GTP-binding protein C of Homo sapiens (Human).